A 250-amino-acid polypeptide reads, in one-letter code: Non-specific acid phosphatase (250 aa).

The signal sequence occupies residues 1 to 20 (MKSRYLVFFLPLIVAKYTSA).

The protein belongs to the class A bacterial acid phosphatase family. In terms of assembly, homodimer.

It localises to the periplasm. The catalysed reaction is a phosphate monoester + H2O = an alcohol + phosphate. The chain is Non-specific acid phosphatase (phoN) from Salmonella typhimurium (strain LT2 / SGSC1412 / ATCC 700720).